A 554-amino-acid chain; its full sequence is Glucose-binding protein GlcS (554 aa).

The Cytoplasmic portion of the chain corresponds to 1 to 17; sequence MKRKYPYSLAKGLTSTQ. The chain crosses the membrane as a helical span at residues 18–38; the sequence is IAVIVAVIVIVIIIGVVAGFV. Residues 39 to 525 are Extracellular-facing; the sequence is LTKGPSTTAV…YGLTNNTQKT (487 aa). The chain crosses the membrane as a helical span at residues 526–546; that stretch reads SNSVMLFLLPFLALPLAIASI. The Cytoplasmic segment spans residues 547–554; it reads DNKYYLLK.

This sequence belongs to the bacterial solute-binding protein 1 family. The complex is composed of two ATP-binding proteins (GlcV), two transmembrane proteins (GlcT and GlcU) and a solute-binding protein (GlcS).

It localises to the cell membrane. With respect to regulation, binding of glucose is strongly inhibited by galactose and mannose. Its function is as follows. Part of the ABC transporter complex GlcSTUV involved in glucose uptake. Binds glucose. Can also bind galactose and mannose. The polypeptide is Glucose-binding protein GlcS (Saccharolobus solfataricus (strain ATCC 35092 / DSM 1617 / JCM 11322 / P2) (Sulfolobus solfataricus)).